The chain runs to 155 residues: Ribonuclease H (155 aa).

The RNase H type-1 domain maps to 1–142; sequence MTKQVEIFTD…CDELARAAAM (142 aa). Residues Asp-10, Glu-48, Asp-70, and Asp-134 each contribute to the Mg(2+) site.

It belongs to the RNase H family. In terms of assembly, monomer. Requires Mg(2+) as cofactor.

The protein resides in the cytoplasm. The catalysed reaction is Endonucleolytic cleavage to 5'-phosphomonoester.. Endonuclease that specifically degrades the RNA of RNA-DNA hybrids. The polypeptide is Ribonuclease H (Enterobacter sp. (strain 638)).